A 213-amino-acid chain; its full sequence is Thiamine-phosphate synthase (213 aa).

Residues 42-46 and D77 each bind 4-amino-2-methyl-5-(diphosphooxymethyl)pyrimidine; that span reads QYREK. Mg(2+)-binding residues include D78 and D97. S116 serves as a coordination point for 4-amino-2-methyl-5-(diphosphooxymethyl)pyrimidine. Residue 142 to 144 participates in 2-[(2R,5Z)-2-carboxy-4-methylthiazol-5(2H)-ylidene]ethyl phosphate binding; sequence TIS. A 4-amino-2-methyl-5-(diphosphooxymethyl)pyrimidine-binding site is contributed by K145. 2-[(2R,5Z)-2-carboxy-4-methylthiazol-5(2H)-ylidene]ethyl phosphate contacts are provided by residues G173 and 193–194; that span reads IS.

The protein belongs to the thiamine-phosphate synthase family. Mg(2+) serves as cofactor.

It carries out the reaction 2-[(2R,5Z)-2-carboxy-4-methylthiazol-5(2H)-ylidene]ethyl phosphate + 4-amino-2-methyl-5-(diphosphooxymethyl)pyrimidine + 2 H(+) = thiamine phosphate + CO2 + diphosphate. It catalyses the reaction 2-(2-carboxy-4-methylthiazol-5-yl)ethyl phosphate + 4-amino-2-methyl-5-(diphosphooxymethyl)pyrimidine + 2 H(+) = thiamine phosphate + CO2 + diphosphate. The enzyme catalyses 4-methyl-5-(2-phosphooxyethyl)-thiazole + 4-amino-2-methyl-5-(diphosphooxymethyl)pyrimidine + H(+) = thiamine phosphate + diphosphate. Its pathway is cofactor biosynthesis; thiamine diphosphate biosynthesis; thiamine phosphate from 4-amino-2-methyl-5-diphosphomethylpyrimidine and 4-methyl-5-(2-phosphoethyl)-thiazole: step 1/1. Functionally, condenses 4-methyl-5-(beta-hydroxyethyl)thiazole monophosphate (THZ-P) and 2-methyl-4-amino-5-hydroxymethyl pyrimidine pyrophosphate (HMP-PP) to form thiamine monophosphate (TMP). This Limosilactobacillus fermentum (strain NBRC 3956 / LMG 18251) (Lactobacillus fermentum) protein is Thiamine-phosphate synthase.